The chain runs to 115 residues: NAD(P)H-quinone oxidoreductase subunit M (115 aa).

The protein belongs to the complex I NdhM subunit family. In terms of assembly, NDH-1 can be composed of about 15 different subunits; different subcomplexes with different compositions have been identified which probably have different functions.

The protein localises to the cellular thylakoid membrane. It catalyses the reaction a plastoquinone + NADH + (n+1) H(+)(in) = a plastoquinol + NAD(+) + n H(+)(out). The enzyme catalyses a plastoquinone + NADPH + (n+1) H(+)(in) = a plastoquinol + NADP(+) + n H(+)(out). In terms of biological role, NDH-1 shuttles electrons from an unknown electron donor, via FMN and iron-sulfur (Fe-S) centers, to quinones in the respiratory and/or the photosynthetic chain. The immediate electron acceptor for the enzyme in this species is believed to be plastoquinone. Couples the redox reaction to proton translocation, and thus conserves the redox energy in a proton gradient. Cyanobacterial NDH-1 also plays a role in inorganic carbon-concentration. The polypeptide is NAD(P)H-quinone oxidoreductase subunit M (Prochlorococcus marinus (strain MIT 9312)).